Consider the following 209-residue polypeptide: Glycolipid transfer protein B (209 aa).

2 repeat units span residues 45–55 and 56–66. The tract at residues 45 to 66 is 2 X 12 AA approximate tandem repeats; sequence IKADITGNITKIRSVYESNPTQ. Beta-D-galactosyl-(1-&gt;4)-beta-D-glucosyl-(1&lt;-&gt;1)-N-[(9Z)-octadecenoyl]-sphing-4-enine is bound at residue 48–55; it reads DITGNITK. Beta-D-galactosyl-(1-&gt;4)-beta-D-glucosyl-(1&lt;-&gt;1)-N-[(9Z)-octadecenoyl]-sphing-4-enine is bound by residues H140 and Y207.

This sequence belongs to the GLTP family.

It is found in the cytoplasm. In terms of biological role, accelerates the intermembrane transfer of various glycolipids. Catalyzes the transfer of various glycosphingolipids between membranes but does not catalyze the transfer of phospholipids. May be involved in the intracellular translocation of glucosylceramides. In Xenopus laevis (African clawed frog), this protein is Glycolipid transfer protein B (gltp-b).